The following is a 242-amino-acid chain: MSDKLKERKRTPVSHKVIEKRRRDRINRCLNELGKTVPMALAKQSSGKLEKAEILEMTVQYLRALHSADFPRGREKAELLAEFANYFHYGYHECMKNLVHYLTTVERMETKDTKYARILAFLQSKARLGAEPAFPPLGSLPEPDFSYQLHPAGPEFAGHSPGEAAVFPQGSGAGPFPWPPGAARSPALPYLPSAPVPLASPAQQHSPFLTPVQGLDRHYLNLIGHAHPNALNLHTPQHPPVL.

A bHLH domain is found at 10 to 65 (RTPVSHKVIEKRRRDRINRCLNELGKTVPMALAKQSSGKLEKAEILEMTVQYLRAL). At Lys48 the chain carries N6-acetyllysine. The Orange domain occupies 87 to 122 (FHYGYHECMKNLVHYLTTVERMETKDTKYARILAFL).

The protein belongs to the HEY family. Self-associates. Interacts with HES5 and HEY2.

The protein localises to the nucleus. Functionally, transcriptional repressor which binds preferentially to the canonical E box sequence 5'-CACGCG-3'. This is Hairy and enhancer of split-related protein HELT (HELT) from Homo sapiens (Human).